A 370-amino-acid polypeptide reads, in one-letter code: MRVKEQLLTLRAYVPGKNIEEVKREYGLSKIVKLASNENPFGCSARVTEALTSLASQYALYPDGHAFELRTKVAKHLGVKAEQLLFGSGLDEVIQMISRALLHEGTNVVMANPTFSQYHHHAVIEGAEVREVSLKDGIHDLDAMLQQVDDQTKIVWICNPNNPTGTYVEKQKLLSFLESVPKSALVIMDEAYYEYAGAEDYPQTLPLLEKYENLMVLRTFSKAYGLAAFRIGYAVGNTELIGQLEVARLPFNTSTVAQSVALAALEDQAFLQECVKKNEEGLHQYYAFCKEYNVFYYPSQTNFIFLKLGIPGNEAFERLMKKGYIVRSGAAFGIDDGIRITVGLKEENDEIIELLKELVNEQVQKEETYS.

N6-(pyridoxal phosphate)lysine is present on Lys222.

It belongs to the class-II pyridoxal-phosphate-dependent aminotransferase family. Histidinol-phosphate aminotransferase subfamily. In terms of assembly, homodimer. Pyridoxal 5'-phosphate is required as a cofactor.

It catalyses the reaction L-histidinol phosphate + 2-oxoglutarate = 3-(imidazol-4-yl)-2-oxopropyl phosphate + L-glutamate. Its pathway is amino-acid biosynthesis; L-histidine biosynthesis; L-histidine from 5-phospho-alpha-D-ribose 1-diphosphate: step 7/9. The chain is Histidinol-phosphate aminotransferase 1 from Bacillus thuringiensis subsp. konkukian (strain 97-27).